The primary structure comprises 331 residues: Homoserine O-succinyltransferase (331 aa).

C141 acts as the Acyl-thioester intermediate in catalysis. Positions 162 and 190 each coordinate substrate. H233 (proton acceptor) is an active-site residue. E235 is a catalytic residue. R247 lines the substrate pocket.

It belongs to the MetA family.

Its subcellular location is the cytoplasm. The catalysed reaction is L-homoserine + succinyl-CoA = O-succinyl-L-homoserine + CoA. Its pathway is amino-acid biosynthesis; L-methionine biosynthesis via de novo pathway; O-succinyl-L-homoserine from L-homoserine: step 1/1. Functionally, transfers a succinyl group from succinyl-CoA to L-homoserine, forming succinyl-L-homoserine. The chain is Homoserine O-succinyltransferase from Methylorubrum extorquens (strain DSM 6343 / CIP 106787 / DM4) (Methylobacterium extorquens).